A 483-amino-acid polypeptide reads, in one-letter code: Jacalin-related lectin 13 (483 aa).

A disordered region spans residues 1–20 (MTQKLESVGSERKSSEYMWD). Jacalin-type lectin domains are found at residues 2–147 (TQKL…YVTW), 150–295 (PARM…YFTT), and 307–461 (FREK…YFFP).

Belongs to the jacalin lectin family.

The polypeptide is Jacalin-related lectin 13 (JAL13) (Arabidopsis thaliana (Mouse-ear cress)).